The following is a 156-amino-acid chain: Small ribosomal subunit protein uS7 (156 aa).

Belongs to the universal ribosomal protein uS7 family. As to quaternary structure, part of the 30S ribosomal subunit. Contacts proteins S9 and S11.

Its function is as follows. One of the primary rRNA binding proteins, it binds directly to 16S rRNA where it nucleates assembly of the head domain of the 30S subunit. Is located at the subunit interface close to the decoding center, probably blocks exit of the E-site tRNA. This Clostridium novyi (strain NT) protein is Small ribosomal subunit protein uS7.